Consider the following 165-residue polypeptide: Chorismate pyruvate-lyase (165 aa).

Positions 35, 77, 115, and 156 each coordinate substrate.

Belongs to the UbiC family. In terms of assembly, monomer.

The protein localises to the cytoplasm. It catalyses the reaction chorismate = 4-hydroxybenzoate + pyruvate. It participates in cofactor biosynthesis; ubiquinone biosynthesis. In terms of biological role, removes the pyruvyl group from chorismate, with concomitant aromatization of the ring, to provide 4-hydroxybenzoate (4HB) for the ubiquinone pathway. This is Chorismate pyruvate-lyase from Escherichia coli O7:K1 (strain IAI39 / ExPEC).